A 157-amino-acid chain; its full sequence is Probable succinate transporter subunit YjjB (157 aa).

4 consecutive transmembrane segments (helical) span residues 8–28 (FALA…AMVF), 57–77 (LNIE…GIQW), 87–107 (VFTV…TAMI), and 129–149 (FLTA…PGLW).

This sequence belongs to the ThrE exporter (TC 2.A.79) family. In terms of assembly, the transporter is composed of YjjB and YjjP.

The protein resides in the cell inner membrane. Its function is as follows. Involved in succinate export with YjjP. Both proteins are required for export. In Shigella boydii serotype 4 (strain Sb227), this protein is Probable succinate transporter subunit YjjB.